We begin with the raw amino-acid sequence, 582 residues long: Formate--tetrahydrofolate ligase (582 aa).

Residue 65-72 participates in ATP binding; sequence TPLGEGKT.

It belongs to the formate--tetrahydrofolate ligase family.

The enzyme catalyses (6S)-5,6,7,8-tetrahydrofolate + formate + ATP = (6R)-10-formyltetrahydrofolate + ADP + phosphate. The protein operates within one-carbon metabolism; tetrahydrofolate interconversion. The sequence is that of Formate--tetrahydrofolate ligase from Vibrio campbellii (strain ATCC BAA-1116).